Reading from the N-terminus, the 350-residue chain is UPF0284 protein MJ1598 (350 aa).

The protein belongs to the UPF0284 family.

This Methanocaldococcus jannaschii (strain ATCC 43067 / DSM 2661 / JAL-1 / JCM 10045 / NBRC 100440) (Methanococcus jannaschii) protein is UPF0284 protein MJ1598.